A 532-amino-acid polypeptide reads, in one-letter code: Metal-staphylopine-binding protein CntA (532 aa).

An N-terminal signal peptide occupies residues 1–20 (MRKLTKMSAMLLASGLILTG). A lipid anchor (N-palmitoyl cysteine) is attached at Cys21. A lipid anchor (S-diacylglycerol cysteine) is attached at Cys21. Staphylopine-binding residues include Arg165, Arg418, and Asn448.

This sequence belongs to the bacterial solute-binding protein 5 family. In terms of assembly, the complex is composed of two ATP-binding proteins (CntD and CntF), two transmembrane proteins (CntB and CntC) and a solute-binding protein (CntA).

Its subcellular location is the cell membrane. Nickel/cobalt import is reduced in the presence of zinc. In terms of biological role, part of the ABC transporter complex CntABCDF (Opp1) involved in the uptake of metal in complex with the metallophore staphylopine (StP). Involved in the import of divalent metals ions such as nickel, cobalt and zinc. Binds the metal via the metallophore StP, and transfers the StP-metal complex to the membrane-bound permease. Binds one molecule of StP/metal. Binds StP/Co(2+) and StP/Ni(2+) tighter than StP/Zn(2+). Plays a major role in nickel/cobalt import in zinc-depleted conditions. Contributes to virulence. Required for full urease activity in vitro. In Staphylococcus aureus (strain NCTC 8325 / PS 47), this protein is Metal-staphylopine-binding protein CntA.